The primary structure comprises 172 residues: Ribosome maturation factor RimM (172 aa).

The PRC barrel domain maps to 95–168; it reads QEGEFYYHQI…CVDVELMEGL (74 aa).

It belongs to the RimM family. Binds ribosomal protein uS19.

It is found in the cytoplasm. An accessory protein needed during the final step in the assembly of 30S ribosomal subunit, possibly for assembly of the head region. Essential for efficient processing of 16S rRNA. May be needed both before and after RbfA during the maturation of 16S rRNA. It has affinity for free ribosomal 30S subunits but not for 70S ribosomes. The protein is Ribosome maturation factor RimM of Streptococcus pyogenes serotype M49 (strain NZ131).